Reading from the N-terminus, the 224-residue chain is dTTP/UTP pyrophosphatase (224 aa).

Residue aspartate 77 is the Proton acceptor of the active site.

Belongs to the Maf family. YhdE subfamily. The cofactor is a divalent metal cation.

Its subcellular location is the cytoplasm. It carries out the reaction dTTP + H2O = dTMP + diphosphate + H(+). The enzyme catalyses UTP + H2O = UMP + diphosphate + H(+). Its function is as follows. Nucleoside triphosphate pyrophosphatase that hydrolyzes dTTP and UTP. May have a dual role in cell division arrest and in preventing the incorporation of modified nucleotides into cellular nucleic acids. The protein is dTTP/UTP pyrophosphatase of Dehalococcoides mccartyi (strain ATCC BAA-2100 / JCM 16839 / KCTC 5957 / BAV1).